The primary structure comprises 196 residues: Protein kinase OspG (196 aa).

This sequence belongs to the protein kinase superfamily. Autophosphorylated.

It is found in the secreted. The protein localises to the host cell. In terms of biological role, effector proteins function to alter host cell physiology and promote bacterial survival in host tissues. This protein is a kinase that is involved in down-regulation of the host innate response induced by invasive bacteria. In Shigella flexneri serotype X (strain 2002017), this protein is Protein kinase OspG (ospG).